Consider the following 173-residue polypeptide: Co-chaperone protein HscB homolog (173 aa).

Residues 5 to 77 form the J domain; sequence CHYALFDLQP…PRRARYLLAI (73 aa).

The protein belongs to the HscB family. Interacts with HscA and stimulates its ATPase activity.

Its function is as follows. Co-chaperone involved in the maturation of iron-sulfur cluster-containing proteins. Seems to help targeting proteins to be folded toward HscA. The protein is Co-chaperone protein HscB homolog of Pseudomonas putida (strain ATCC 700007 / DSM 6899 / JCM 31910 / BCRC 17059 / LMG 24140 / F1).